We begin with the raw amino-acid sequence, 264 residues long: Energy-coupling factor transporter ATP-binding protein EcfA1 (264 aa).

Positions 2-234 (IQVENLSFSY…DEFNPFLIKI (233 aa)) constitute an ABC transporter domain. Position 34-41 (34-41 (GKNGSGKS)) interacts with ATP.

It belongs to the ABC transporter superfamily. Energy-coupling factor EcfA family. As to quaternary structure, forms a stable energy-coupling factor (ECF) transporter complex composed of 2 membrane-embedded substrate-binding proteins (S component), 2 ATP-binding proteins (A component) and 2 transmembrane proteins (T component).

Its subcellular location is the cell inner membrane. In terms of biological role, ATP-binding (A) component of a common energy-coupling factor (ECF) ABC-transporter complex. Unlike classic ABC transporters this ECF transporter provides the energy necessary to transport a number of different substrates. In Fusobacterium nucleatum subsp. nucleatum (strain ATCC 25586 / DSM 15643 / BCRC 10681 / CIP 101130 / JCM 8532 / KCTC 2640 / LMG 13131 / VPI 4355), this protein is Energy-coupling factor transporter ATP-binding protein EcfA1.